Here is a 638-residue protein sequence, read N- to C-terminus: Phosphomethylpyrimidine synthase (638 aa).

Residues N236, M265, Y294, H330, 350–352 (SRG), 391–394 (DGLR), and E430 contribute to the substrate site. H434 contacts Zn(2+). Y457 is a substrate binding site. H498 contacts Zn(2+). Residues C578, C581, and C586 each contribute to the [4Fe-4S] cluster site. The segment covering 608–624 (AEGASQQEAEQGMQEMS) has biased composition (low complexity). Residues 608-633 (AEGASQQEAEQGMQEMSQKYKDAGRR) form a disordered region.

Belongs to the ThiC family. As to quaternary structure, homodimer. Requires [4Fe-4S] cluster as cofactor.

It carries out the reaction 5-amino-1-(5-phospho-beta-D-ribosyl)imidazole + S-adenosyl-L-methionine = 4-amino-2-methyl-5-(phosphooxymethyl)pyrimidine + CO + 5'-deoxyadenosine + formate + L-methionine + 3 H(+). The protein operates within cofactor biosynthesis; thiamine diphosphate biosynthesis. Its function is as follows. Catalyzes the synthesis of the hydroxymethylpyrimidine phosphate (HMP-P) moiety of thiamine from aminoimidazole ribotide (AIR) in a radical S-adenosyl-L-methionine (SAM)-dependent reaction. The sequence is that of Phosphomethylpyrimidine synthase from Hahella chejuensis (strain KCTC 2396).